The chain runs to 626 residues: Mini-chromosome maintenance complex-binding protein (626 aa).

2 disordered regions span residues 152–216 and 265–287; these read STSY…LDLN and PSSL…AHDP. Residues 177 to 196 show a composition bias toward basic and acidic residues; the sequence is KQREPHTEPHGNGDSKRQET. A compositionally biased stretch (polar residues) spans 197–210; sequence EAPSSQTTAPSDCS.

It belongs to the MCMBP family. As to quaternary structure, interacts with the mcm complex: associates with the mcm3-7 complex which lacks mcm2, while it does not interact with the mcm complex when mcm2 is present (mcm2-7 complex).

It localises to the nucleus. Its function is as follows. Associated component of the mcm complex that acts as a regulator of DNA replication. Binds to the MCM complex during late S phase and promotes the disassembly of the mcm complex from chromatin, thereby acting as a key regulator of pre-replication complex (pre-RC) unloading from replicated DNA. Can dissociate the mcm complex without addition of ATP; probably acts by destabilizing interactions of each individual subunits of the mcm complex. Required for sister chromatid cohesion. This is Mini-chromosome maintenance complex-binding protein (mcmbp) from Salmo salar (Atlantic salmon).